A 350-amino-acid chain; its full sequence is Protein TRIGALACTOSYLDIACYLGLYCEROL 1, chloroplastic (350 aa).

A disordered region spans residues 67-86 (SMSMLEEETSTENNAPSQEA). Residues 98-117 (YIWRGLSVPIIAGQVVLRIL) traverse the membrane as a helical segment. Residues 118-136 (KGKIHWRNTLQQLERTGPK) lie on the Stromal side of the membrane. Residues 137–157 (SLGVCLLTSTFVGMAFTIQFV) form a helical membrane-spanning segment. Residues 158–168 (REFTRLGLNRS) are Chloroplast intermembrane-facing. Residues 169 to 189 (IGGVLALAFSRELSPVITSIV) traverse the membrane as a helical segment. Residues 190-229 (VAGRMGSAFAAELGTMQVSEQTDTLRVLGADPIDYLITPR) lie on the Stromal side of the membrane. Residues 230–250 (VIASCLALPFLTLMCFTVGMA) traverse the membrane as a helical segment. The Chloroplast intermembrane segment spans residues 251–288 (SSALLSDAVYGISINIIMDSAHRALRPWDIVSAMIKSQ). A helical transmembrane segment spans residues 289–309 (VFGAIISVISCSWGVTTTGGA). Topologically, residues 310 to 318 (KGVGESTTS) are stromal. A helical membrane pass occupies residues 319-339 (AVVMSLVGIFIADFVLSSFFF). Residues 340 to 350 (QGAGDSLKNCV) lie on the Chloroplast intermembrane side of the membrane.

It belongs to the MlaE permease family. In terms of assembly, permease subunit of the TGD complex, a lipid translocator at the inner chloroplast envelope membrane made of TGD1, TGD2 and TGD3. Interacts with TGD2 and TGD3 with an overall subunit stoichiometry of 2 TGD1, 2 TGD3 and 8 to 12 TGD2. Interacts with TGD5. High levels in green tissues, but low levels in nongreen tissues such as roots.

It is found in the plastid. The protein resides in the chloroplast inner membrane. Functionally, required during embryogenesis. Permease involved in lipid transfer from the endoplasmic reticulum (ER) to plastids, and necessary for thylakoids formation. The sequence is that of Protein TRIGALACTOSYLDIACYLGLYCEROL 1, chloroplastic from Arabidopsis thaliana (Mouse-ear cress).